Consider the following 286-residue polypeptide: Bifunctional protein FolD (286 aa).

NADP(+) is bound by residues 166–168 (GAS) and isoleucine 232.

Belongs to the tetrahydrofolate dehydrogenase/cyclohydrolase family. In terms of assembly, homodimer.

The catalysed reaction is (6R)-5,10-methylene-5,6,7,8-tetrahydrofolate + NADP(+) = (6R)-5,10-methenyltetrahydrofolate + NADPH. It catalyses the reaction (6R)-5,10-methenyltetrahydrofolate + H2O = (6R)-10-formyltetrahydrofolate + H(+). It functions in the pathway one-carbon metabolism; tetrahydrofolate interconversion. Functionally, catalyzes the oxidation of 5,10-methylenetetrahydrofolate to 5,10-methenyltetrahydrofolate and then the hydrolysis of 5,10-methenyltetrahydrofolate to 10-formyltetrahydrofolate. The polypeptide is Bifunctional protein FolD (Shewanella piezotolerans (strain WP3 / JCM 13877)).